The sequence spans 148 residues: MTMFSTRSRLRSAAADTFALVVYCFVIGMIIEIVISGMTFQQSLSSRLVSIPVNILIAWPYGLYRDAFIRFARRHAGEHMWARNLADLLAYVSFQSPVYALILWSVGADLEQITTAVASNALVSMAMGVAYGYFLEYCRKLFRVAGYI.

The next 4 helical transmembrane spans lie at 18–38 (FALV…ISGM), 49–69 (VSIP…DAFI), 88–108 (LLAY…SVGA), and 115–135 (TAVA…GYFL).

Belongs to the AlaE exporter family.

It localises to the cell inner membrane. Exports L-alanine. The sequence is that of L-alanine exporter AlaE from Yersinia enterocolitica subsp. palearctica serotype O:3 (strain DSM 13030 / CIP 106945 / Y11).